A 166-amino-acid chain; its full sequence is Putative pre-16S rRNA nuclease (166 aa).

The interval 1–24 is disordered; sequence MPDTAAPTPDRPGPDDPGRGRRLG.

This sequence belongs to the YqgF nuclease family.

It localises to the cytoplasm. Could be a nuclease involved in processing of the 5'-end of pre-16S rRNA. In Mycobacteroides abscessus (strain ATCC 19977 / DSM 44196 / CCUG 20993 / CIP 104536 / JCM 13569 / NCTC 13031 / TMC 1543 / L948) (Mycobacterium abscessus), this protein is Putative pre-16S rRNA nuclease.